The primary structure comprises 369 residues: Signal recognition particle receptor FtsY (369 aa).

A compositionally biased stretch (basic and acidic residues) spans 20 to 42 (GEENKKEPETRQTDQLESKKEET). The disordered stretch occupies residues 20 to 58 (GEENKKEPETRQTDQLESKKEETIQQQQNVQQPQAENKI). Positions 44–53 (QQQQNVQQPQ) are enriched in low complexity. GTP-binding positions include 180–187 (GVNGVGKT), 262–266 (DTAGR), and 320–323 (TKVD).

Belongs to the GTP-binding SRP family. FtsY subfamily. In terms of assembly, part of the signal recognition particle protein translocation system, which is composed of SRP and FtsY.

It localises to the cell membrane. It is found in the cytoplasm. The catalysed reaction is GTP + H2O = GDP + phosphate + H(+). Functionally, involved in targeting and insertion of nascent membrane proteins into the cytoplasmic membrane. Acts as a receptor for the complex formed by the signal recognition particle (SRP) and the ribosome-nascent chain (RNC). This is Signal recognition particle receptor FtsY from Sulfolobus acidocaldarius (strain ATCC 33909 / DSM 639 / JCM 8929 / NBRC 15157 / NCIMB 11770).